The primary structure comprises 398 residues: NADH-ubiquinone oxidoreductase 49 kDa subunit (398 aa).

It belongs to the complex I 49 kDa subunit family.

The protein resides in the mitochondrion. The enzyme catalyses a ubiquinone + NADH + 5 H(+)(in) = a ubiquinol + NAD(+) + 4 H(+)(out). In terms of biological role, core subunit of the mitochondrial membrane respiratory chain NADH dehydrogenase (Complex I) that is believed to belong to the minimal assembly required for catalysis. Complex I functions in the transfer of electrons from NADH to the respiratory chain. The immediate electron acceptor for the enzyme is believed to be ubiquinone. Component of the iron-sulfur (IP) fragment of the enzyme. Component of the iron-sulfur (IP) fragment of the enzyme. The protein is NADH-ubiquinone oxidoreductase 49 kDa subunit (NAD7) of Cafeteria roenbergensis (Marine flagellate).